Reading from the N-terminus, the 378-residue chain is Erythronate-4-phosphate dehydrogenase (378 aa).

2 residues coordinate substrate: serine 45 and threonine 66. 2 residues coordinate NAD(+): aspartate 146 and threonine 175. Arginine 208 is a catalytic residue. Aspartate 232 is a binding site for NAD(+). The active site involves glutamate 237. Residue histidine 254 is the Proton donor of the active site. An NAD(+)-binding site is contributed by glycine 257. A substrate-binding site is contributed by tyrosine 258.

This sequence belongs to the D-isomer specific 2-hydroxyacid dehydrogenase family. PdxB subfamily. Homodimer.

It is found in the cytoplasm. It carries out the reaction 4-phospho-D-erythronate + NAD(+) = (R)-3-hydroxy-2-oxo-4-phosphooxybutanoate + NADH + H(+). The protein operates within cofactor biosynthesis; pyridoxine 5'-phosphate biosynthesis; pyridoxine 5'-phosphate from D-erythrose 4-phosphate: step 2/5. Catalyzes the oxidation of erythronate-4-phosphate to 3-hydroxy-2-oxo-4-phosphonooxybutanoate. The protein is Erythronate-4-phosphate dehydrogenase of Escherichia coli O6:H1 (strain CFT073 / ATCC 700928 / UPEC).